Reading from the N-terminus, the 103-residue chain is Co-chaperonin GroES (103 aa).

Belongs to the GroES chaperonin family. Heptamer of 7 subunits arranged in a ring. Interacts with the chaperonin GroEL.

The protein localises to the cytoplasm. In terms of biological role, together with the chaperonin GroEL, plays an essential role in assisting protein folding. The GroEL-GroES system forms a nano-cage that allows encapsulation of the non-native substrate proteins and provides a physical environment optimized to promote and accelerate protein folding. GroES binds to the apical surface of the GroEL ring, thereby capping the opening of the GroEL channel. This is Co-chaperonin GroES from Trichodesmium erythraeum (strain IMS101).